The primary structure comprises 239 residues: Diablo IAP-binding mitochondrial protein (239 aa).

Residues 1–21 (MAALKSWLSRSVTSFFRYRQC) constitute a mitochondrion transit peptide. The IAP-binding motif lies at 56 to 60 (AVPIA). Residues 217–239 (RQKTQEEGEERAESEQEAYLRED) form a disordered region.

The protein belongs to the Smac/DIABLO protein family. In terms of assembly, homodimer. Interacts with BIRC2/c-IAP1 (via BIR3 domain). Interacts with BIRC6/BRUCE; inhibits BIRC6 activity. Interacts with BIRC7/livin. Interacts with XIAP/BIRC4 (via BIR3 domain). Interacts with the monomeric and dimeric form of BIRC5/survivin. Interacts with AREL1 (via HECT domain); in the cytoplasm following induction of apoptosis. Interacts with BEX3. In terms of processing, ubiquitinated by BIRC7/livin. Ubiquitinated by BIRC6. Post-translationally, the precursor form is proteolytically cleaved by mitochondrial processing peptidase MPP to remove the transit peptide and produce an intermediate form. This is then processed by PARL to produce the mature cleaved form which is released from mitochondria into the cytosol in apoptotic cells. In terms of tissue distribution, ubiquitously expressed with highest expression in testis. Expression is also high in heart, liver, kidney, spleen, prostate and ovary. Low in brain, lung, thymus and peripheral blood leukocytes. Isoform 3 is ubiquitously expressed.

The protein localises to the mitochondrion. It is found in the cytoplasm. It localises to the cytosol. In terms of biological role, promotes apoptosis by activating caspases in the cytochrome c/Apaf-1/caspase-9 pathway. Acts by opposing the inhibitory activity of inhibitor of apoptosis proteins (IAP). Inhibits the activity of BIRC6/BRUCE by inhibiting its binding to caspases. Its function is as follows. Attenuates the stability and apoptosis-inhibiting activity of XIAP/BIRC4 by promoting XIAP/BIRC4 ubiquitination and degradation through the ubiquitin-proteasome pathway. Also disrupts XIAP/BIRC4 interacting with processed caspase-9 and promotes caspase-3 activation. Functionally, defective in the capacity to down-regulate the XIAP/BIRC4 abundance. The sequence is that of Diablo IAP-binding mitochondrial protein from Homo sapiens (Human).